The sequence spans 655 residues: Acetyl-coenzyme A synthetase (655 aa).

CoA is bound by residues 196–199 (RGGK) and Thr316. ATP contacts are provided by residues 392–394 (GEP), 416–421 (DTWWQT), Asp507, and Arg522. Position 530 (Ser530) interacts with CoA. ATP is bound at residue Arg533. Residues Val544 and Val549 each contribute to the Mg(2+) site. At Lys619 the chain carries N6-acetyllysine.

The protein belongs to the ATP-dependent AMP-binding enzyme family. The cofactor is Mg(2+). In terms of processing, acetylated. Deacetylation by the SIR2-homolog deacetylase activates the enzyme.

It catalyses the reaction acetate + ATP + CoA = acetyl-CoA + AMP + diphosphate. Its function is as follows. Catalyzes the conversion of acetate into acetyl-CoA (AcCoA), an essential intermediate at the junction of anabolic and catabolic pathways. AcsA undergoes a two-step reaction. In the first half reaction, AcsA combines acetate with ATP to form acetyl-adenylate (AcAMP) intermediate. In the second half reaction, it can then transfer the acetyl group from AcAMP to the sulfhydryl group of CoA, forming the product AcCoA. This Thiobacillus denitrificans (strain ATCC 25259 / T1) protein is Acetyl-coenzyme A synthetase.